A 217-amino-acid chain; its full sequence is Pyrrolidone-carboxylate peptidase (217 aa).

Catalysis depends on residues E78, C141, and H168.

This sequence belongs to the peptidase C15 family. As to quaternary structure, homotetramer.

The protein localises to the cytoplasm. It catalyses the reaction Release of an N-terminal pyroglutamyl group from a polypeptide, the second amino acid generally not being Pro.. In terms of biological role, removes 5-oxoproline from various penultimate amino acid residues except L-proline. The chain is Pyrrolidone-carboxylate peptidase from Treponema denticola (strain ATCC 35405 / DSM 14222 / CIP 103919 / JCM 8153 / KCTC 15104).